The chain runs to 75 residues: Veswaprin-b (75 aa).

Positions 1–24 (MSSGGLLLLLGLLTLWAELTPISG) are cleaved as a signal peptide. The segment at 23 to 42 (SGQDRPKKPGLRPPRPQKPP) is disordered. One can recognise a WAP; atypical domain in the interval 27–72 (RPKKPGLRPPRPQKPPCVRECKNDWRCPGEQKCCRYGCIYECRDPI). Intrachain disulfides connect cysteine 43–cysteine 64, cysteine 47–cysteine 59, and cysteine 53–cysteine 68.

This sequence belongs to the venom waprin family. Expressed by the venom gland.

It is found in the secreted. In terms of biological role, damages membranes of susceptible bacteria. Has no hemolytic activity. Not toxic to mice. Does not inhibit the proteinases elastase and cathepsin G. The sequence is that of Veswaprin-b from Demansia vestigiata (Lesser black whip snake).